Here is a 247-residue protein sequence, read N- to C-terminus: Probable transcriptional regulatory protein Asuc_1803 (247 aa).

Belongs to the TACO1 family.

It localises to the cytoplasm. The polypeptide is Probable transcriptional regulatory protein Asuc_1803 (Actinobacillus succinogenes (strain ATCC 55618 / DSM 22257 / CCUG 43843 / 130Z)).